We begin with the raw amino-acid sequence, 661 residues long: Coagulation factor XIII B chain (661 aa).

Positions 1 to 20 are cleaved as a signal peptide; sequence MRLKNLTFIIILIISGELYA. Sushi domains follow at residues 24–88, 89–148, 151–210, 211–269, 272–329, 334–391, 394–452, 453–516, 522–580, and 581–647; these read PCGF…PRCF, KKCT…TCRK, ETCL…KCTK, LKCS…VCEG, NRCP…KCIE, VACE…ECVE, ENCK…VCLE, PCTV…PLCT, GMCT…LCLE, and PCTL…PRCI. Cystine bridges form between cysteine 25-cysteine 76, cysteine 59-cysteine 87, cysteine 91-cysteine 135, cysteine 118-cysteine 146, cysteine 153-cysteine 197, cysteine 180-cysteine 208, cysteine 213-cysteine 255, cysteine 241-cysteine 267, cysteine 274-cysteine 316, cysteine 302-cysteine 327, cysteine 336-cysteine 378, cysteine 364-cysteine 389, cysteine 396-cysteine 439, cysteine 425-cysteine 450, cysteine 454-cysteine 505, cysteine 486-cysteine 515, cysteine 524-cysteine 567, cysteine 553-cysteine 578, cysteine 582-cysteine 636, and cysteine 616-cysteine 646. An N-linked (GlcNAc...) asparagine glycan is attached at asparagine 162. Residue asparagine 545 is glycosylated (N-linked (GlcNAc...) asparagine). The Cell attachment site signature appears at 617–619; sequence RGD.

In terms of assembly, tetramer of two A chains (F13A1) and two B (F13B) chains.

It localises to the secreted. In terms of biological role, the B chain of factor XIII is not catalytically active, but is thought to stabilize the A subunits and regulate the rate of transglutaminase formation by thrombin. This is Coagulation factor XIII B chain (F13B) from Homo sapiens (Human).